The following is a 325-amino-acid chain: MTFIDKIRGHWARRMTVAAVAALLLPGLVGVVGGSATAGAFSRPGLPVEYLMVPSPSMGRDIKVQFQSGGPGSHAVYLLDGLRAQDDFNGWDINTNAFEMFLDSGLSVVMPVGGQSSFYSDWYQPACGNNGCVTYKWETFLTSELPEWLAANRDVAATGNAAIGLSMAGSAALILAAYHPDRFIYAGSMSGFLNPSEGWWPFLINISMGDAGGYKANDMWGPTEDPNSAWKRNDPMVQIPRLVANNTRIWVYCGNGQPNELGGGDLPATFLEGLTIRTNETFRDNYIAAGGNNGVFNFPNNGTHNWAYWGRELQAMVPDLQRVLG.

An N-terminal signal peptide occupies residues 1 to 38; the sequence is MTFIDKIRGHWARRMTVAAVAALLLPGLVGVVGGSATA. 82–83 provides a ligand contact to substrate; it reads LR. Residues 98–108 form a fibronectin-binding region; the sequence is FEMFLDSGLSV. C127 and C132 are joined by a disulfide. S166 lines the substrate pocket. S166 (nucleophile) is an active-site residue. Residue E272 is part of the active site. Substrate contacts are provided by residues 274 to 277 and 304 to 306; these read LTIR and HNW. H304 is an active-site residue.

It belongs to the mycobacterial A85 antigen family.

The protein resides in the secreted. It catalyses the reaction 2 alpha,alpha'-trehalose 6-mycolate = alpha,alpha'-trehalose 6,6'-bismycolate + alpha,alpha-trehalose. The catalysed reaction is an acyl-CoA + a 1,2-diacyl-sn-glycerol = a triacyl-sn-glycerol + CoA. Functionally, the antigen 85 proteins (FbpA, FbpB, FbpC) are responsible for the high affinity of mycobacteria for fibronectin, a large adhesive glycoprotein. They also help to maintain the integrity of the cell wall by catalyzing the transfer of mycolic acids to cell wall arabinogalactan and through the synthesis of alpha,alpha-trehalose dimycolate (TDM, cord factor). They catalyze the transfer of a mycoloyl residue from one molecule of alpha,alpha-trehalose monomycolate (TMM) to another TMM, leading to the formation of TDM. This Mycolicibacterium smegmatis (strain ATCC 700084 / mc(2)155) (Mycobacterium smegmatis) protein is Diacylglycerol acyltransferase/mycolyltransferase Ag85B (fbpB).